A 316-amino-acid chain; its full sequence is Ribosomal RNA small subunit methyltransferase H (316 aa).

Residues 35–37, Asp55, Phe84, Asp105, and Gln112 each bind S-adenosyl-L-methionine; that span reads SGH.

This sequence belongs to the methyltransferase superfamily. RsmH family.

It is found in the cytoplasm. It carries out the reaction cytidine(1402) in 16S rRNA + S-adenosyl-L-methionine = N(4)-methylcytidine(1402) in 16S rRNA + S-adenosyl-L-homocysteine + H(+). Specifically methylates the N4 position of cytidine in position 1402 (C1402) of 16S rRNA. The protein is Ribosomal RNA small subunit methyltransferase H of Streptococcus pyogenes serotype M4 (strain MGAS10750).